A 486-amino-acid polypeptide reads, in one-letter code: Glycogen synthase (486 aa).

Lys-15 is an ADP-alpha-D-glucose binding site.

The protein belongs to the glycosyltransferase 1 family. Bacterial/plant glycogen synthase subfamily.

It carries out the reaction [(1-&gt;4)-alpha-D-glucosyl](n) + ADP-alpha-D-glucose = [(1-&gt;4)-alpha-D-glucosyl](n+1) + ADP + H(+). It functions in the pathway glycan biosynthesis; glycogen biosynthesis. Synthesizes alpha-1,4-glucan chains using ADP-glucose. This Thermotoga petrophila (strain ATCC BAA-488 / DSM 13995 / JCM 10881 / RKU-1) protein is Glycogen synthase.